We begin with the raw amino-acid sequence, 162 residues long: uncharacterized protein (162 aa).

The C2H2-type zinc-finger motif lies at 29–50 (CPFCDYTNADAKVVRKHVKSKH). Residues 60–93 (KLESQKSKNNGKKQTGQKKQGKGKKQPKRVRETC) are disordered. Basic residues predominate over residues 68–87 (NNGKKQTGQKKQGKGKKQPK).

The protein to M.jannaschii MJECS06.

This is an uncharacterized protein from Methanocaldococcus jannaschii (strain ATCC 43067 / DSM 2661 / JAL-1 / JCM 10045 / NBRC 100440) (Methanococcus jannaschii).